The following is a 95-amino-acid chain: Putative defensin-like protein 262 (95 aa).

The signal sequence occupies residues 1 to 26; that stretch reads MEKTSLKLIFLFSLTVIAFCSSLGDA. 4 disulfide bridges follow: C48–C95, C64–C83, C70–C91, and C74–C93.

Belongs to the DEFL family.

Its subcellular location is the secreted. This is Putative defensin-like protein 262 from Arabidopsis thaliana (Mouse-ear cress).